The following is a 159-amino-acid chain: 2-C-methyl-D-erythritol 2,4-cyclodiphosphate synthase (159 aa).

Positions 10 and 12 each coordinate a divalent metal cation. Residues 10-12 (DVH) and 36-37 (HS) contribute to the 4-CDP-2-C-methyl-D-erythritol 2-phosphate site. His-44 contributes to the a divalent metal cation binding site. 4-CDP-2-C-methyl-D-erythritol 2-phosphate contacts are provided by residues 58–60 (DIG), 63–67 (FPDTD), 102–108 (AQAPKMA), 134–137 (TTTE), Phe-141, and Arg-144.

This sequence belongs to the IspF family. In terms of assembly, homotrimer. It depends on a divalent metal cation as a cofactor.

The enzyme catalyses 4-CDP-2-C-methyl-D-erythritol 2-phosphate = 2-C-methyl-D-erythritol 2,4-cyclic diphosphate + CMP. The protein operates within isoprenoid biosynthesis; isopentenyl diphosphate biosynthesis via DXP pathway; isopentenyl diphosphate from 1-deoxy-D-xylulose 5-phosphate: step 4/6. Involved in the biosynthesis of isopentenyl diphosphate (IPP) and dimethylallyl diphosphate (DMAPP), two major building blocks of isoprenoid compounds. Catalyzes the conversion of 4-diphosphocytidyl-2-C-methyl-D-erythritol 2-phosphate (CDP-ME2P) to 2-C-methyl-D-erythritol 2,4-cyclodiphosphate (ME-CPP) with a corresponding release of cytidine 5-monophosphate (CMP). This chain is 2-C-methyl-D-erythritol 2,4-cyclodiphosphate synthase, found in Idiomarina loihiensis (strain ATCC BAA-735 / DSM 15497 / L2-TR).